A 126-amino-acid polypeptide reads, in one-letter code: Ribosome-binding factor A (126 aa).

Belongs to the RbfA family. As to quaternary structure, monomer. Binds 30S ribosomal subunits, but not 50S ribosomal subunits or 70S ribosomes.

Its subcellular location is the cytoplasm. Its function is as follows. One of several proteins that assist in the late maturation steps of the functional core of the 30S ribosomal subunit. Associates with free 30S ribosomal subunits (but not with 30S subunits that are part of 70S ribosomes or polysomes). Required for efficient processing of 16S rRNA. May interact with the 5'-terminal helix region of 16S rRNA. This is Ribosome-binding factor A from Geobacillus sp. (strain WCH70).